A 99-amino-acid polypeptide reads, in one-letter code: Nucleoid-associated protein SPN23F10240 (99 aa).

It belongs to the YbaB/EbfC family. In terms of assembly, homodimer.

It localises to the cytoplasm. The protein localises to the nucleoid. Functionally, binds to DNA and alters its conformation. May be involved in regulation of gene expression, nucleoid organization and DNA protection. The sequence is that of Nucleoid-associated protein SPN23F10240 from Streptococcus pneumoniae (strain ATCC 700669 / Spain 23F-1).